Consider the following 345-residue polypeptide: UDP-3-O-acylglucosamine N-acyltransferase (345 aa).

The active-site Proton acceptor is the histidine 239.

This sequence belongs to the transferase hexapeptide repeat family. LpxD subfamily. As to quaternary structure, homotrimer.

It catalyses the reaction a UDP-3-O-[(3R)-3-hydroxyacyl]-alpha-D-glucosamine + a (3R)-hydroxyacyl-[ACP] = a UDP-2-N,3-O-bis[(3R)-3-hydroxyacyl]-alpha-D-glucosamine + holo-[ACP] + H(+). The protein operates within bacterial outer membrane biogenesis; LPS lipid A biosynthesis. Catalyzes the N-acylation of UDP-3-O-acylglucosamine using 3-hydroxyacyl-ACP as the acyl donor. Is involved in the biosynthesis of lipid A, a phosphorylated glycolipid that anchors the lipopolysaccharide to the outer membrane of the cell. This is UDP-3-O-acylglucosamine N-acyltransferase from Geobacter metallireducens (strain ATCC 53774 / DSM 7210 / GS-15).